We begin with the raw amino-acid sequence, 496 residues long: Glutamate--tRNA ligase 2 (496 aa).

The 'HIGH' region motif lies at 13-23 (PSPTGRLHVGG). Residues 255–259 (KLSKR) carry the 'KMSKS' region motif. An ATP-binding site is contributed by lysine 258.

Belongs to the class-I aminoacyl-tRNA synthetase family. Glutamate--tRNA ligase type 1 subfamily. In terms of assembly, monomer.

Its subcellular location is the cytoplasm. The enzyme catalyses tRNA(Glu) + L-glutamate + ATP = L-glutamyl-tRNA(Glu) + AMP + diphosphate. In terms of biological role, catalyzes the attachment of glutamate to tRNA(Glu) in a two-step reaction: glutamate is first activated by ATP to form Glu-AMP and then transferred to the acceptor end of tRNA(Glu). The polypeptide is Glutamate--tRNA ligase 2 (Rubrobacter xylanophilus (strain DSM 9941 / JCM 11954 / NBRC 16129 / PRD-1)).